The chain runs to 751 residues: MGKSGGRKKKSGGSNSNSSQVNSSETSGLSKPSTIVNGGVDFDASIFLKRAHELKEEGNKKFQARDYVGALEQYENGIKLIPKSHPDRAVFHSNRAACLMQMKPIDYESVISECSMALKSQPGFTRALLRRARAFEAVGKFDLAVQDVNVLLGSDPNHKDAGEISKRLKTALGPHQDLQSRPSPAALGASAALGGPIAGLGPCLPSRNVHKKGVTSPVGSVSLPNASNGKVERPQVVNPVTENGGSVSKGQASRVVLKPVSHSPKGSKVEELGSSSVAVVGKVQEKRIRWRPLKFVYDHDIRLGQMPVNCRFKELREIVSSRFPSSKAVLIKYKDNDGDLVTITSTAELKLAESAADCILTKEPDTDKSDSVGMLRLHVVDVSPEQEPMLLEEEEEEVEEKPVIEEVISSPTESLSETEINTEKTDKEVEKEKASSSEDPETKELEMDDWLFDFAHLFRTHVGIDPDAHIDLHELGMELCSEALEETVTSEKAQPLFDKASAKFQEVAALAFFNWGNVHMCAARKRIPLDESAGKEVVAAQLQTAYEWVKERYTLAKEKYEQALSIKPDFYEGLLALGQQQFEMAKLHWSYLLAQKIDISGWDPSETLNLFDSAEAKMKDATEMWEKLEEQRMDDLKNPNSNKKEEVSKRRKKQGGDGNEEVSETITAEEAAEQATAMRSQIHLFWGNMLFERSQVECKIGKDGWNKNLDSAVERFKLAGASEADIATVVKNHCSNEAAATEGDEKKVPAP.

Over residues Met-1–Ser-11 the composition is skewed to basic residues. The segment at Met-1–Ser-33 is disordered. Residues Gly-12–Gly-28 show a composition bias toward low complexity. 3 TPR repeats span residues Ala-51–Ser-84, Ala-89–Phe-124, and Thr-125–His-158. The region spanning Trp-290–Val-382 is the PB1 domain. Positions Gln-386–Lys-443 are disordered. Residues Leu-390–Glu-399 show a composition bias toward acidic residues. The segment covering Ser-409–Glu-419 has biased composition (polar residues). A compositionally biased stretch (basic and acidic residues) spans Asn-421–Lys-443. TPR repeat units lie at residues Ala-434–Ala-468, Ser-481–Asn-514, and Glu-536–Phe-570. Basic and acidic residues predominate over residues Glu-630–Ser-648. The tract at residues Glu-630–Ser-663 is disordered.

As to quaternary structure, interacts with myosin XI-K. Expressed in roots, stems, leaves, apex, flowers and seeds. Detected throughout the petiole in juvenile and young leaves, but restricted to the petiole midvein in older leaves. Expressed in hydathodes, at the base of the trichome, in the vascular cylinder of primary root and lateral root, in emerging lateral root primordia, in pollen and in developing embryos, but not in mature embryos.

It is found in the cytoplasm. Required for plastid separation and partitioning during cell division. Not involved in plastid constriction or in the organization of cytoplasmic actin cables. Contributes to polar growth of root hairs. This chain is Protein CLMP1, found in Arabidopsis thaliana (Mouse-ear cress).